A 419-amino-acid chain; its full sequence is UDP-N-acetylglucosamine 1-carboxyvinyltransferase (419 aa).

23–24 (KN) is a binding site for phosphoenolpyruvate. R92 serves as a coordination point for UDP-N-acetyl-alpha-D-glucosamine. The Proton donor role is filled by C116. C116 carries the post-translational modification 2-(S-cysteinyl)pyruvic acid O-phosphothioketal. Residues 121–125 (RPVDL), 161–164 (KVSV), D306, and I328 contribute to the UDP-N-acetyl-alpha-D-glucosamine site.

This sequence belongs to the EPSP synthase family. MurA subfamily.

It localises to the cytoplasm. The enzyme catalyses phosphoenolpyruvate + UDP-N-acetyl-alpha-D-glucosamine = UDP-N-acetyl-3-O-(1-carboxyvinyl)-alpha-D-glucosamine + phosphate. Its pathway is cell wall biogenesis; peptidoglycan biosynthesis. Its function is as follows. Cell wall formation. Adds enolpyruvyl to UDP-N-acetylglucosamine. The protein is UDP-N-acetylglucosamine 1-carboxyvinyltransferase of Vibrio cholerae serotype O1 (strain ATCC 39541 / Classical Ogawa 395 / O395).